We begin with the raw amino-acid sequence, 264 residues long: Proliferating cell nuclear antigen (264 aa).

A DNA-binding region spans residues arginine 61–lysine 80.

Belongs to the PCNA family.

The protein resides in the nucleus. This protein is an auxiliary protein of DNA polymerase delta and is involved in the control of eukaryotic DNA replication by increasing the polymerase's processibility during elongation of the leading strand. This Daucus carota (Wild carrot) protein is Proliferating cell nuclear antigen.